The chain runs to 314 residues: Methionyl-tRNA formyltransferase (314 aa).

111 to 114 (SLLP) serves as a coordination point for (6S)-5,6,7,8-tetrahydrofolate.

This sequence belongs to the Fmt family.

It catalyses the reaction L-methionyl-tRNA(fMet) + (6R)-10-formyltetrahydrofolate = N-formyl-L-methionyl-tRNA(fMet) + (6S)-5,6,7,8-tetrahydrofolate + H(+). Its function is as follows. Attaches a formyl group to the free amino group of methionyl-tRNA(fMet). The formyl group appears to play a dual role in the initiator identity of N-formylmethionyl-tRNA by promoting its recognition by IF2 and preventing the misappropriation of this tRNA by the elongation apparatus. In Coxiella burnetii (strain CbuK_Q154) (Coxiella burnetii (strain Q154)), this protein is Methionyl-tRNA formyltransferase.